A 393-amino-acid polypeptide reads, in one-letter code: Cytotoxic and regulatory T-cell molecule (393 aa).

A signal peptide spans 1 to 16 (MWWGALSLLFWVPVQA). An Ig-like V-type domain is found at 17–111 (AFLKMETVTV…SVKTKQVRVT (95 aa)). Residues 17–289 (AFLKMETVTV…HTGLARRKSG (273 aa)) are Extracellular-facing. Disulfide bonds link Cys36/Cys96 and Cys139/Cys194. N-linked (GlcNAc...) asparagine glycans are attached at residues Asn85 and Asn176. The region spanning 119 to 208 (PTVEALVLRR…EGLHGRKLVA (90 aa)) is the Ig-like C2-type domain. The span at 218–228 (DQETSDQETSD) shows a compositional bias: acidic residues. The disordered stretch occupies residues 218–280 (DQETSDQETS…GLSTEASAQH (63 aa)). The segment covering 229 to 246 (APEQSSLSSQALQQPTST) has biased composition (low complexity). The span at 247 to 256 (VSMMENSSIP) shows a compositional bias: polar residues. Residues 257 to 267 (ETDKEEKEHAT) show a composition bias toward basic and acidic residues. Polar residues predominate over residues 270–280 (PGLSTEASAQH). Residues 290–310 (ILLLTLVSFLIFILFIIVQLF) form a helical membrane-spanning segment. At 311-393 (IMKLRKAHVV…KHSRVPESIV (83 aa)) the chain is on the cytoplasmic side. A disordered region spans residues 333–356 (ESYRSRSNNEETSSQENSSQAPQS). The span at 342–352 (EETSSQENSSQ) shows a compositional bias: low complexity. The PDZ-binding signature appears at 390–393 (ESIV).

This sequence belongs to the nectin family. Monomer. May form homodimer (via Ig-like V-type domain). Interacts (via Ig-like V-type domain) with CADM1 (via Ig-like V-type domain); the interaction competes with CRTAM homodimerization and CADM1 homodimerization. Interacts (via PDZ-binding motif) with SCRIB (via PDZ domain 3); the interaction promotes CRTAM and SCRIB polarization in a subset of CD4+ T-cells. In terms of tissue distribution, in the immune system, expression is restricted to activated class-I MHC-restricted cells, including NKT, NK and CD8+ T-cells (at protein level). Transiently expressed in activated CD8+ T-cells and a subset of activated CD4+ T-cells (at protein level). Expressed in activated intestinal T-cells, specifically intraepithelial CD4+ CD8+ T-cells, intraepithelial CD4+ T-cells and, CD8+ T-cells in the intestine epithelium, lamina propria, Peyer's Patches and mesenteric lymph nodes. Also expressed in spleen, brain and testis.

The protein localises to the cell membrane. Mediates heterophilic cell-cell adhesion which regulates the activation, differentiation and tissue retention of various T-cell subsets. Interaction with CADM1 promotes natural killer (NK) cell cytotoxicity and IFNG/interferon-gamma secretion by CD8+ T-cells in vitro as well as NK cell-mediated rejection of tumors expressing CADM1 in vivo. Regulates CD8+ T-cell proliferation in response to T-cell receptor (TCR) activation. Appears to be dispensable for CD8+ T-cell-mediated cytotoxicity. Interaction with SCRIB promotes the late phase of cellular polarization of a subset of CD4+ T-cells, which in turn regulates TCR-mediated proliferation and IFNG, IL17 and IL22 production. By interacting with CADM1 on CD8+ dendritic cells, regulates the retention of activated CD8+ T-cells within the draining lymph node. Required for the intestinal retention of intraepithelial CD4+ CD8+ T-cells and, to a lesser extent, intraepithelial and lamina propria CD8+ T-cells and CD4+ T-cells. Interaction with CADM1 promotes the adhesion to gut-associated CD103+ dendritic cells, which may facilitate the expression of gut-homing and adhesion molecules on T-cells and the conversion of CD4+ T-cells into CD4+ CD8+ T-cells. The polypeptide is Cytotoxic and regulatory T-cell molecule (Mus musculus (Mouse)).